The primary structure comprises 333 residues: Protein FLAP1 homolog A (333 aa).

Residues 26-46 (VVIIFVLAFTLVFTPTFEAEA) form a helical membrane-spanning segment. The disordered stretch occupies residues 53-74 (IGGGSFRAPSAPSRSYSGPSGG). Low complexity predominate over residues 58–70 (FRAPSAPSRSYSG). 2 helical membrane passes run 92–112 (IIPF…LVMI) and 261–281 (GEYI…LPAV).

Belongs to the FLAP family.

Its subcellular location is the cellular thylakoid membrane. It is found in the cell inner membrane. Essential for photosynthetic growth under fluctuating light by modulating PxcA- and PxcL-dependent intracellular pH regulation via proton transport (e.g. transient pH reduction upon transition from dark to light followed by an increase in the light until light-to-dark shift). This Synechocystis sp. (strain ATCC 27184 / PCC 6803 / Kazusa) protein is Protein FLAP1 homolog A.